The primary structure comprises 2009 residues: MEQTVLVPPGPDSFNFFTRESLAAIERRIAEEKAKNPKPDKKDDDENGPKPNSDLEAGKNLPFIYGDIPPEMVSEPLEDLDPYYINKKTFIVLNKGKAIFRFSATSALYILTPFNPLRKIAIKILVHSLFSMLIMCTILTNCVFMTMSNPPDWTKNVEYTFTGIYTFESLIKIIARGFCLEDFTFLRDPWNWLDFTVITFAYVTEFVDLGNVSALRTFRVLRALKTISVIPGLKTIVGALIQSVKKLSDVMILTVFCLSVFALIGLQLFMGNLRNKCIQWPPTNASLEEHSIEKNITVNYNGTLINETVFEFDWKSYIQDSRYHYFLEGFLDALLCGNSSDAGQCPEGYMCVKAGRNPNYGYTSFDTFSWAFLSLFRLMTQDFWENLYQLTLRAAGKTYMIFFVLVIFLGSFYLINLILAVVAMAYEEQNQATLEEAEQKEAEFQQMIEQLKKQQEAAQQAATATASEHSREPSAAGRLSDSSSEASKLSSKSAKERRNRRKKRKQKEQSGGEEKDEDEFQKSESEDSIRRKGFRFSIEGNRLTYEKRYSSPHQSLLSIRGSLFSPRRNSRTSLFSFRGRAKDVGSENDFADDEHSTFEDNESRRDSLFVPRRHGERRNSNLSQTSRSSRMLAVFPANGKMHSTVDCNGVVSLVGGPSVPTSPVGQLLPEVIIDKPATDDNGTTTETEMRKRRSSSFHVSMDFLEDPSQRQRAMSIASILTNTVEELEESRQKCPPCWYKFSNIFLIWDCSPYWLKVKHVVNLVVMDPFVDLAITICIVLNTLFMAMEHYPMTDHFNNVLTVGNLVFTGIFTAEMFLKIIAMDPYYYFQEGWNIFDGFIVTLSLVELGLANVEGLSVLRSFRLLRVFKLAKSWPTLNMLIKIIGNSVGALGNLTLVLAIIVFIFAVVGMQLFGKSYKDCVCKIASDCQLPRWHMNDFFHSFLIVFRVLCGEWIETMWDCMEVAGQAMCLTVFMMVMVIGNLVVLNLFLALLLSSFSADNLAATDDDNEMNNLQIAVDRMHKGVAYVKRKIYEFIQQSFIRKQKILDEIKPLDDLNNKKDSCMSNHTAEIGKDLDYLKDVNGTTSGIGTGSSVEKYIIDESDYMSFINNPSLTVTVPIAVGESDFENLNTEDFSSESDLEESKEKLNESSSSSEGSTVDIGAPVEEQPVVEPEETLEPEACFTEGCVQRFKCCQINVEEGRGKQWWNLRRTCFRIVEHNWFETFIVFMILLSSGALAFEDIYIDQRKTIKTMLEYADKVFTYIFILEMLLKWVAYGYQTYFTNAWCWLDFLIVDVSLVSLTANALGYSELGAIKSLRTLRALRPLRALSRFEGMRVVVNALLGAIPSIMNVLLVCLIFWLIFSIMGVNLFAGKFYHCINTTTGDRFDIEDVNNHTDCLKLIERNETARWKNVKVNFDNVGFGYLSLLQVATFKGWMDIMYAAVDSRNVELQPKYEESLYMYLYFVIFIIFGSFFTLNLFIGVIIDNFNQQKKKFGGQDIFMTEEQKKYYNAMKKLGSKKPQKPIPRPGNKFQGMVFDFVTRQVFDISIMILICLNMVTMMVETDDQSEYVTTILSRINLVFIVLFTGECVLKLISLRHYYFTIGWNIFDFVVVILSIVGMFLAELIEKYFVSPTLFRVIRLARIGRILRLIKGAKGIRTLLFALMMSLPALFNIGLLLFLVMFIYAIFGMSNFAYVKREVGIDDMFNFETFGNSMICLFQITTSAGWDGLLAPILNSKPPDCDPNKVNPGSSVKGDCGNPSVGIFFFVSYIIISFLVVVNMYIAVILENFSVATEESAEPLSEDDFEMFYEVWEKFDPDATQFMEFEKLSQFAAALEPPLNLPQPNKLQLIAMDLPMVSGDRIHCLDILFAFTKRVLGESGEMDALRIQMEERFMASNPSKVSYQPITTTLKRKQEEVSAVIIQRAYRRHLLKRTVKQASFTYNKNKIKGGANLLIKEDMIIDRINENSITEKTDLTMSTAACPPSYDRVTKPIVEKHEQEGKDEKAKGK.

Residues 1-128 lie on the Cytoplasmic side of the membrane; it reads MEQTVLVPPG…KIAIKILVHS (128 aa). Residues 28–48 show a composition bias toward basic and acidic residues; sequence RIAEEKAKNPKPDKKDDDENG. The tract at residues 28–60 is disordered; it reads RIAEEKAKNPKPDKKDDDENGPKPNSDLEAGKN. One copy of the I repeat lies at 110–454; that stretch reads ILTPFNPLRK…QQMIEQLKKQ (345 aa). A helical membrane pass occupies residues 129-146; it reads LFSMLIMCTILTNCVFMT. Over 147-152 the chain is Extracellular; it reads MSNPPD. A helical transmembrane segment spans residues 153–177; sequence WTKNVEYTFTGIYTFESLIKIIARG. Over 178 to 188 the chain is Cytoplasmic; it reads FCLEDFTFLRD. The helical transmembrane segment at 189–205 threads the bilayer; it reads PWNWLDFTVITFAYVTE. Residues 206–213 lie on the Extracellular side of the membrane; sequence FVDLGNVS. An N-linked (GlcNAc...) asparagine glycan is attached at Asn211. Residues 214 to 235 traverse the membrane as a helical segment; the sequence is ALRTFRVLRALKTISVIPGLKT. Topologically, residues 236-245 are cytoplasmic; it reads IVGALIQSVK. The helical transmembrane segment at 246-269 threads the bilayer; that stretch reads KLSDVMILTVFCLSVFALIGLQLF. The Extracellular segment spans residues 270–369; that stretch reads MGNLRNKCIQ…YGYTSFDTFS (100 aa). 2 disulfides stabilise this stretch: Cys277–Cys345 and Cys336–Cys351. N-linked (GlcNAc...) asparagine glycosylation is found at Asn284, Asn295, Asn301, Asn306, and Asn338. Positions 370-384 form an intramembrane region, pore-forming; the sequence is WAFLSLFRLMTQDFW. At 385–397 the chain is on the extracellular side; that stretch reads ENLYQLTLRAAGK. The helical transmembrane segment at 398–423 threads the bilayer; sequence TYMIFFVLVIFLGSFYLINLILAVVA. Topologically, residues 424-768 are cytoplasmic; that stretch reads MAYEEQNQAT…HVVNLVVMDP (345 aa). Residues 455–529 are disordered; that stretch reads QEAAQQAATA…FQKSESEDSI (75 aa). Positions 456-466 are enriched in low complexity; that stretch reads EAAQQAATATA. Position 470 is a phosphoserine (Ser470). Positions 479–492 are enriched in low complexity; it reads LSDSSSEASKLSSK. Basic residues predominate over residues 495–506; the sequence is KERRNRRKKRKQ. Positions 520–529 are enriched in basic and acidic residues; that stretch reads FQKSESEDSI. Residues Ser523, Ser525, Ser550, Ser551, Ser607, and Ser730 each carry the phosphoserine modification. A disordered region spans residues 584–627; that stretch reads VGSENDFADDEHSTFEDNESRRDSLFVPRRHGERRNSNLSQTSR. Residues 593–607 are compositionally biased toward basic and acidic residues; that stretch reads DEHSTFEDNESRRDS. One copy of the II repeat lies at 750 to 1022; that stretch reads CSPYWLKVKH…QIAVDRMHKG (273 aa). A helical transmembrane segment spans residues 769–787; that stretch reads FVDLAITICIVLNTLFMAM. Residues 788–797 are Extracellular-facing; it reads EHYPMTDHFN. The helical transmembrane segment at 798–820 threads the bilayer; the sequence is NVLTVGNLVFTGIFTAEMFLKII. The Cytoplasmic segment spans residues 821–830; that stretch reads AMDPYYYFQE. A helical membrane pass occupies residues 831-849; that stretch reads GWNIFDGFIVTLSLVELGL. At 850-854 the chain is on the extracellular side; that stretch reads ANVEG. A helical membrane pass occupies residues 855–874; it reads LSVLRSFRLLRVFKLAKSWP. Residues 875–891 lie on the Cytoplasmic side of the membrane; sequence TLNMLIKIIGNSVGALG. The helical transmembrane segment at 892–912 threads the bilayer; that stretch reads NLTLVLAIIVFIFAVVGMQLF. Residues 913–938 are Extracellular-facing; that stretch reads GKSYKDCVCKIASDCQLPRWHMNDFF. A disulfide bond links Cys921 and Cys927. The pore-forming intramembrane region spans 939-952; that stretch reads HSFLIVFRVLCGEW. Over 953–965 the chain is Extracellular; it reads IETMWDCMEVAGQ. Cys959 and Cys968 are oxidised to a cystine. Residues 966–992 traverse the membrane as a helical segment; it reads AMCLTVFMMVMVIGNLVVLNLFLALLL. Residues 993–1218 lie on the Cytoplasmic side of the membrane; sequence SSFSADNLAA…RTCFRIVEHN (226 aa). The tract at residues 1129–1163 is disordered; that stretch reads TEDFSSESDLEESKEKLNESSSSSEGSTVDIGAPV. The stretch at 1200–1514 is one III repeat; it reads RGKQWWNLRR…KKYYNAMKKL (315 aa). Residues 1219-1237 form a helical membrane-spanning segment; it reads WFETFIVFMILLSSGALAF. Topologically, residues 1238–1250 are extracellular; sequence EDIYIDQRKTIKT. Residues 1251–1276 traverse the membrane as a helical segment; sequence MLEYADKVFTYIFILEMLLKWVAYGY. Residues 1277–1278 lie on the Cytoplasmic side of the membrane; that stretch reads QT. The helical transmembrane segment at 1279-1304 threads the bilayer; it reads YFTNAWCWLDFLIVDVSLVSLTANAL. The Extracellular segment spans residues 1305–1313; sequence GYSELGAIK. Residues 1314–1332 form a helical membrane-spanning segment; that stretch reads SLRTLRALRPLRALSRFEG. Residues 1333 to 1345 lie on the Cytoplasmic side of the membrane; sequence MRVVVNALLGAIP. Residues 1346–1369 traverse the membrane as a helical segment; sequence SIMNVLLVCLIFWLIFSIMGVNLF. The Extracellular portion of the chain corresponds to 1370–1415; the sequence is AGKFYHCINTTTGDRFDIEDVNNHTDCLKLIERNETARWKNVKVNF. Cys1376 and Cys1396 are oxidised to a cystine. 3 N-linked (GlcNAc...) asparagine glycosylation sites follow: Asn1378, Asn1392, and Asn1403. Positions 1416-1433 form an intramembrane region, pore-forming; that stretch reads DNVGFGYLSLLQVATFKG. The Extracellular portion of the chain corresponds to 1434–1457; sequence WMDIMYAAVDSRNVELQPKYEESL. Residues 1458–1483 form a helical membrane-spanning segment; it reads YMYLYFVIFIIFGSFFTLNLFIGVII. At 1484–1541 the chain is on the cytoplasmic side; it reads DNFNQQKKKFGGQDIFMTEEQKKYYNAMKKLGSKKPQKPIPRPGNKFQGMVFDFVTRQ. Residue Ser1516 is modified to Phosphoserine; by PKC. One copy of the IV repeat lies at 1523 to 1821; it reads IPRPGNKFQG…WEKFDPDATQ (299 aa). The chain crosses the membrane as a helical span at residues 1542 to 1560; it reads VFDISIMILICLNMVTMMV. Over 1561–1571 the chain is Extracellular; sequence ETDDQSEYVTT. An S1-S2 loop of repeat IV region spans residues 1561 to 1571; sequence ETDDQSEYVTT. Residues 1572–1593 traverse the membrane as a helical segment; the sequence is ILSRINLVFIVLFTGECVLKLI. Residues 1594–1601 lie on the Cytoplasmic side of the membrane; sequence SLRHYYFT. A helical membrane pass occupies residues 1602–1623; it reads IGWNIFDFVVVILSIVGMFLAE. Residues 1619–1636 are S3b-S4 loop of repeat IV; sequence MFLAELIEKYFVSPTLFR. Over 1624–1636 the chain is Extracellular; sequence LIEKYFVSPTLFR. A helical transmembrane segment spans residues 1637 to 1655; it reads VIRLARIGRILRLIKGAKG. The Cytoplasmic segment spans residues 1656–1665; sequence IRTLLFALMM. A helical membrane pass occupies residues 1666-1688; it reads SLPALFNIGLLLFLVMFIYAIFG. At 1689-1711 the chain is on the extracellular side; the sequence is MSNFAYVKREVGIDDMFNFETFG. Positions 1712–1726 form an intramembrane region, pore-forming; the sequence is NSMICLFQITTSAGW. Residues 1727-1759 lie on the Extracellular side of the membrane; that stretch reads DGLLAPILNSKPPDCDPNKVNPGSSVKGDCGNP. Cysteines 1741 and 1756 form a disulfide. Residues 1760 to 1788 traverse the membrane as a helical segment; the sequence is SVGIFFFVSYIIISFLVVVNMYIAVILEN. Topologically, residues 1789 to 2009 are cytoplasmic; it reads FSVATEESAE…EGKDEKAKGK (221 aa). In terms of domain architecture, IQ spans 1915-1944; sequence EEVSAVIIQRAYRRHLLKRTVKQASFTYNK. The disordered stretch occupies residues 1986–2009; it reads YDRVTKPIVEKHEQEGKDEKAKGK. The segment covering 1988 to 2009 has biased composition (basic and acidic residues); the sequence is RVTKPIVEKHEQEGKDEKAKGK.

The protein belongs to the sodium channel (TC 1.A.1.10) family. Nav1.1/SCN1A subfamily. The Nav1.1 voltage-gated sodium channel consists of an ion-conducting alpha subunit SCN1A which is functional on its own regulated by one or more beta-1 (SCN1B), beta-2 (SCN2B), beta-3 (SCN3B) and beta-4 (SCN4B) subunits. SCN1B and SCN3B are non-covalently associated with SCN1A. SCN2B and SCN4B are disulfide-linked to SCN1A. SCN1B regulates both the expression at the plasma membrane and the voltage dependence of Nav1.1 inactivation. SCN3B and SCN4B reduce Nav1.1 conductance. Probably interacts with TMEM233; modulates the gating properties of NaV1.1. Interacts with FGF13; regulates the steady-state inactivation of Nav.1.1. Phosphorylation at Ser-1516 by PKC in a highly conserved cytoplasmic loop slows inactivation of the sodium channel and reduces peak sodium currents.

The protein localises to the cell membrane. The catalysed reaction is Na(+)(in) = Na(+)(out). Activated by the spider toxins Hm1a and Hm1b (H.maculata, AC P60992 and AC P0DOC5) eliciting acute pain and mechanical allodynia. Inhibited by the conotoxin GVIIJ. Inhibited by the spider beta/delta-theraphotoxin-Pre1a. In terms of biological role, pore-forming subunit of Nav1.1, a voltage-gated sodium (Nav) channel that directly mediates the depolarizing phase of action potentials in excitable membranes. Navs, also called VGSCs (voltage-gated sodium channels) or VDSCs (voltage-dependent sodium channels), operate by switching between closed and open conformations depending on the voltage difference across the membrane. In the open conformation they allow Na(+) ions to selectively pass through the pore, along their electrochemical gradient. The influx of Na(+) ions provokes membrane depolarization, initiating the propagation of electrical signals throughout cells and tissues. By regulating the excitability of neurons, ensures that they respond appropriately to synaptic inputs, maintaining the balance between excitation and inhibition in brain neural circuits. Nav1.1 plays a role in controlling the excitability and action potential propagation from somatosensory neurons, thereby contributing to the sensory perception of mechanically-induced pain. This is Sodium channel protein type 1 subunit alpha from Homo sapiens (Human).